Here is a 354-residue protein sequence, read N- to C-terminus: Tryptophan--tRNA ligase (354 aa).

ATP is bound by residues 13–15 (QPT) and 21–22 (GN). The 'HIGH' region signature appears at 14 to 22 (PTGNLHLGN). Aspartate 137 serves as a coordination point for L-tryptophan. Residues 149–151 (GDD), valine 208, and 217–221 (KMSKS) each bind ATP. The 'KMSKS' region signature appears at 217-221 (KMSKS).

It belongs to the class-I aminoacyl-tRNA synthetase family. Homodimer.

It is found in the cytoplasm. The catalysed reaction is tRNA(Trp) + L-tryptophan + ATP = L-tryptophyl-tRNA(Trp) + AMP + diphosphate + H(+). In terms of biological role, catalyzes the attachment of tryptophan to tRNA(Trp). The sequence is that of Tryptophan--tRNA ligase from Agrobacterium fabrum (strain C58 / ATCC 33970) (Agrobacterium tumefaciens (strain C58)).